A 169-amino-acid polypeptide reads, in one-letter code: E1B protein, small T-antigen (169 aa).

Belongs to the adenoviridae E1B 19 kDa protein family.

The chain is E1B protein, small T-antigen from Canis lupus familiaris (Dog).